The following is a 173-amino-acid chain: Crossover junction endodeoxyribonuclease RuvC (173 aa).

Active-site residues include D8, E67, and D139. Residues D8, E67, and D139 each contribute to the Mg(2+) site.

This sequence belongs to the RuvC family. In terms of assembly, homodimer which binds Holliday junction (HJ) DNA. The HJ becomes 2-fold symmetrical on binding to RuvC with unstacked arms; it has a different conformation from HJ DNA in complex with RuvA. In the full resolvosome a probable DNA-RuvA(4)-RuvB(12)-RuvC(2) complex forms which resolves the HJ. Requires Mg(2+) as cofactor.

Its subcellular location is the cytoplasm. The catalysed reaction is Endonucleolytic cleavage at a junction such as a reciprocal single-stranded crossover between two homologous DNA duplexes (Holliday junction).. In terms of biological role, the RuvA-RuvB-RuvC complex processes Holliday junction (HJ) DNA during genetic recombination and DNA repair. Endonuclease that resolves HJ intermediates. Cleaves cruciform DNA by making single-stranded nicks across the HJ at symmetrical positions within the homologous arms, yielding a 5'-phosphate and a 3'-hydroxyl group; requires a central core of homology in the junction. The consensus cleavage sequence is 5'-(A/T)TT(C/G)-3'. Cleavage occurs on the 3'-side of the TT dinucleotide at the point of strand exchange. HJ branch migration catalyzed by RuvA-RuvB allows RuvC to scan DNA until it finds its consensus sequence, where it cleaves and resolves the cruciform DNA. In Shewanella oneidensis (strain ATCC 700550 / JCM 31522 / CIP 106686 / LMG 19005 / NCIMB 14063 / MR-1), this protein is Crossover junction endodeoxyribonuclease RuvC.